We begin with the raw amino-acid sequence, 241 residues long: Proteasome subunit alpha (241 aa).

It belongs to the peptidase T1A family. The 20S proteasome core is composed of 14 alpha and 14 beta subunits that assemble into four stacked heptameric rings, resulting in a barrel-shaped structure. The two inner rings, each composed of seven catalytic beta subunits, are sandwiched by two outer rings, each composed of seven alpha subunits. The catalytic chamber with the active sites is on the inside of the barrel. Has a gated structure, the ends of the cylinder being occluded by the N-termini of the alpha-subunits. Is capped at one or both ends by the proteasome regulatory ATPase, PAN.

Its subcellular location is the cytoplasm. Its activity is regulated as follows. The formation of the proteasomal ATPase PAN-20S proteasome complex, via the docking of the C-termini of PAN into the intersubunit pockets in the alpha-rings, triggers opening of the gate for substrate entry. Interconversion between the open-gate and close-gate conformations leads to a dynamic regulation of the 20S proteasome proteolysis activity. Functionally, component of the proteasome core, a large protease complex with broad specificity involved in protein degradation. This is Proteasome subunit alpha from Saccharolobus solfataricus (strain ATCC 35092 / DSM 1617 / JCM 11322 / P2) (Sulfolobus solfataricus).